We begin with the raw amino-acid sequence, 421 residues long: Testin (421 aa).

The region spanning 92-199 (MILTNPVAAK…GDVKLPRDMN (108 aa)) is the PET domain. Disordered regions lie at residues 133 to 164 (EKQP…PSKC) and 193 to 213 (KLPR…GGDR). Residues 155 to 164 (PAHDQDPSKC) show a composition bias toward basic and acidic residues. LIM zinc-binding domains follow at residues 234–297 (YSCY…CDSE), 299–359 (PRCA…NHAV), and 362–421 (QGCH…KMMS).

The protein belongs to the prickle / espinas / testin family. As to quaternary structure, interacts via LIM domain 1 with ZYX. Interacts (via LIM domain 3) with ENAH and VASP. Interacts with ALKBH4, talin, actin, alpha-actinin, GRIP1 and PXN. Interacts (via LIM domain 2) with ACTL7A (via N-terminus). Heterodimer with ACTL7A; the heterodimer interacts with ENAH to form a heterotrimer.

It localises to the cytoplasm. The protein resides in the cell junction. Its subcellular location is the focal adhesion. In terms of biological role, scaffold protein that may play a role in cell adhesion, cell spreading and in the reorganization of the actin cytoskeleton. Plays a role in the regulation of cell proliferation. May act as a tumor suppressor. The sequence is that of Testin (TES) from Muntiacus muntjak (Barking deer).